A 184-amino-acid polypeptide reads, in one-letter code: Dual-action ribosomal maturation protein DarP (184 aa).

The disordered stretch occupies residues 1 to 21 (MYKHPDEEWLDEIPGQQENED).

It belongs to the DarP family.

It localises to the cytoplasm. In terms of biological role, member of a network of 50S ribosomal subunit biogenesis factors which assembles along the 30S-50S interface, preventing incorrect 23S rRNA structures from forming. Promotes peptidyl transferase center (PTC) maturation. This Edwardsiella ictaluri (strain 93-146) protein is Dual-action ribosomal maturation protein DarP.